The chain runs to 124 residues: Large ribosomal subunit protein bL12 (124 aa).

It belongs to the bacterial ribosomal protein bL12 family. In terms of assembly, homodimer. Part of the ribosomal stalk of the 50S ribosomal subunit. Forms a multimeric L10(L12)X complex, where L10 forms an elongated spine to which 2 to 4 L12 dimers bind in a sequential fashion. Binds GTP-bound translation factors.

Functionally, forms part of the ribosomal stalk which helps the ribosome interact with GTP-bound translation factors. Is thus essential for accurate translation. This chain is Large ribosomal subunit protein bL12, found in Borreliella afzelii (strain PKo) (Borrelia afzelii).